Reading from the N-terminus, the 718-residue chain is uncharacterized protein (718 aa).

Belongs to the asfivirus C717R family.

The protein resides in the virion. This is an uncharacterized protein from African swine fever virus (isolate Pig/Kenya/KEN-50/1950) (ASFV).